The following is a 1541-amino-acid chain: ATP-binding cassette sub-family C member 2 (1541 aa).

The Extracellular portion of the chain corresponds to Met-1–Phe-26. Asn-6 carries an N-linked (GlcNAc...) asparagine glycan. Residues Glu-27–Leu-47 form a helical membrane-spanning segment. Topologically, residues Tyr-48–Lys-67 are cytoplasmic. The helical transmembrane segment at Gln-68–Glu-88 threads the bilayer. Over Asp-89–Gln-92 the chain is Extracellular. The chain crosses the membrane as a helical span at residues Ala-93–Val-113. The Cytoplasmic segment spans residues Leu-114–Arg-125. A helical membrane pass occupies residues Lys-126 to Phe-146. Topologically, residues Gln-147–Ser-164 are extracellular. A helical membrane pass occupies residues Tyr-165 to Gly-185. Topologically, residues Pro-186 to Ser-309 are cytoplasmic. Ser-279 and Ser-281 each carry phosphoserine. The chain crosses the membrane as a helical span at residues Leu-310–Leu-330. The ABC transmembrane type-1 1 domain occupies Ile-318–Gln-601. The Extracellular portion of the chain corresponds to Leu-331–Gly-356. A helical membrane pass occupies residues Tyr-357 to Tyr-377. Topologically, residues Phe-378–Tyr-433 are cytoplasmic. A helical transmembrane segment spans residues Met-434 to Glu-454. Over Leu-455–Pro-457 the chain is Extracellular. Residues Ser-458–Thr-478 form a helical membrane-spanning segment. Residues Lys-479–Ser-540 are Cytoplasmic-facing. A helical membrane pass occupies residues Leu-541–Tyr-561. Residues Val-562–Asn-583 lie on the Extracellular side of the membrane. A helical membrane pass occupies residues Ile-584–Val-604. The Cytoplasmic segment spans residues Ser-605 to Leu-967. The region spanning Val-633–Thr-857 is the ABC transporter 1 domain. Gly-667–Ser-674 lines the ATP pocket. Disordered stretches follow at residues Ser-862–Asp-881 and Arg-901–Leu-923. Ser-874 carries the phosphoserine modification. Over residues Arg-906–Ser-915 the composition is skewed to low complexity. Ser-922 and Ser-926 each carry phosphoserine. The helical transmembrane segment at Gln-968–Ala-988 threads the bilayer. The 286-residue stretch at Ile-975–Thr-1260 folds into the ABC transmembrane type-1 2 domain. The Extracellular segment spans residues Phe-989 to Ala-1029. N-linked (GlcNAc...) asparagine glycosylation is found at Asn-1007, Asn-1010, and Asn-1011. A helical transmembrane segment spans residues Gln-1030–Lys-1050. The Cytoplasmic portion of the chain corresponds to Ala-1051–Gln-1093. A helical transmembrane segment spans residues Thr-1094–Met-1114. Residue Ala-1115 is a topological domain, extracellular. Residues Thr-1116 to Phe-1136 traverse the membrane as a helical segment. The Cytoplasmic portion of the chain corresponds to Tyr-1137–Leu-1207. The helical transmembrane segment at Glu-1208–Thr-1228 threads the bilayer. The Extracellular segment spans residues Leu-1229–Thr-1230. A helical membrane pass occupies residues Gly-1231–Leu-1251. Residues Val-1252–Leu-1541 are Cytoplasmic-facing. Residues Ile-1296–Glu-1530 enclose the ABC transporter 2 domain. Gly-1330–Ser-1337 is a binding site for ATP. A Phosphoserine modification is found at Ser-1434.

The protein belongs to the ABC transporter superfamily. ABCC family. Conjugate transporter (TC 3.A.1.208) subfamily. In terms of tissue distribution, mainly expressed in the liver.

It is found in the apical cell membrane. It catalyses the reaction an S-substituted glutathione(in) + ATP + H2O = an S-substituted glutathione(out) + ADP + phosphate + H(+). The catalysed reaction is taurolithocholate 3-sulfate(in) + ATP + H2O = taurolithocholate 3-sulfate(out) + ADP + phosphate + H(+). The enzyme catalyses ATP + H2O + xenobioticSide 1 = ADP + phosphate + xenobioticSide 2.. It carries out the reaction 17beta-estradiol 17-O-(beta-D-glucuronate)(in) + ATP + H2O = 17beta-estradiol 17-O-(beta-D-glucuronate)(out) + ADP + phosphate + H(+). It catalyses the reaction leukotriene C4(in) + ATP + H2O = leukotriene C4(out) + ADP + phosphate + H(+). The catalysed reaction is (4Z,15Z)-bilirubin IXalpha C8-beta-D-glucuronoside(in) + ATP + H2O = (4Z,15Z)-bilirubin IXalpha C8-beta-D-glucuronoside(out) + ADP + phosphate + H(+). The enzyme catalyses (4Z,15Z)-bilirubin IXalpha C8,C12-beta-D-bisglucuronoside(in) + ATP + H2O = (4Z,15Z)-bilirubin IXalpha C8,C12-beta-D-bisglucuronoside(out) + ADP + phosphate + H(+). ATP-dependent transporter of the ATP-binding cassette (ABC) family that binds and hydrolyzes ATP to enable active transport of various substrates including many drugs, toxicants and endogenous compound across cell membranes. Transports a wide variety of conjugated organic anions such as sulfate-, glucuronide- and glutathione (GSH)-conjugates of endo- and xenobiotics substrates. Mediates hepatobiliary excretion of mono- and bis-glucuronidated bilirubin molecules and therefore play an important role in bilirubin detoxification. Also mediates hepatobiliary excretion of others glucuronide conjugates such as 17beta-estradiol 17-glucosiduronic acid and leukotriene C4. Transports sulfated bile salt such as taurolithocholate sulfate. Transports various anticancer drugs, such as anthracycline, vinca alkaloid and methotrexate and HIV-drugs such as protease inhibitors. The sequence is that of ATP-binding cassette sub-family C member 2 from Rattus norvegicus (Rat).